A 548-amino-acid polypeptide reads, in one-letter code: Chaperonin GroEL (548 aa).

Residues 29–32, Lys-50, 86–90, Gly-416, and Asp-497 contribute to the ATP site; these read TLGP and DGTTT.

This sequence belongs to the chaperonin (HSP60) family. As to quaternary structure, forms a cylinder of 14 subunits composed of two heptameric rings stacked back-to-back. Interacts with the co-chaperonin GroES.

The protein resides in the cytoplasm. The enzyme catalyses ATP + H2O + a folded polypeptide = ADP + phosphate + an unfolded polypeptide.. Functionally, together with its co-chaperonin GroES, plays an essential role in assisting protein folding. The GroEL-GroES system forms a nano-cage that allows encapsulation of the non-native substrate proteins and provides a physical environment optimized to promote and accelerate protein folding. This Neorickettsia sennetsu (strain ATCC VR-367 / Miyayama) (Ehrlichia sennetsu) protein is Chaperonin GroEL.